The chain runs to 76 residues: Sulfur carrier protein TusA (76 aa).

Residue cysteine 15 is the Cysteine persulfide intermediate of the active site.

Belongs to the sulfur carrier protein TusA family. In terms of assembly, mostly a monomer, a small portion forms homodimer via intermolecular disulfide bonds. Tightly interacts with DsrEFH.

It is found in the cytoplasm. The protein operates within energy metabolism; sulfur metabolism. Functionally, sulfur carrier protein involved in sulfur trafficking for oxidative dissimilatory sulfur metabolism. Component of a sulfur relay system that starts with the sulfur-mobilizing rhodanese-like protein Rhd_2599 (Alvin_2599), which transfers the sulfur from a low-molecular-weight thiol, maybe glutathione, to the TusA protein (Alvin_2600); TusA serves as the sulfur donor for DsrEFH, which persulfurates DsrC; persulfurated DsrC very probably serves as a direct substrate for reverse-acting sulfite reductase, DsrAB. TusA seems to be not exclusively dedicated to sulfur oxidation and may have other important roles in the cell. Might also act as a sulfur mediator required for 2-thiouridine formation of tRNA. This chain is Sulfur carrier protein TusA, found in Allochromatium vinosum (strain ATCC 17899 / DSM 180 / NBRC 103801 / NCIMB 10441 / D) (Chromatium vinosum).